The chain runs to 511 residues: MLFESFDLVSALATLAACLVSMALLLAVPQQLWQLRWTATRDKSCKLPMPKGSMGFPIIGETCHWFFQGAGFHASRRQKYGNVFKTHLLGRPLIRVTGAENVRKVLMGEHSLVTVDWPQSTSTLLGPNSLANSIGDIHRKRRKIFAKVFSHEALESYLPKIQQVIQETLRVWSSNPDPINVYRESQRLSFNMAVRVLLGFRIPEEEMHCLFSTFQEFVENVFSLPIDLPFSGYRKGIRARDSLQKSIEKAIREKPLHTQGKDYTDALDVLLESAKENNTELTMQELKESTIELIFAAFATTASASTSLVMQLLRHPAVLEKLREELRSCGLLHDGCLCQGELRLDSIISLKYLDCVIKEVLRLFAPVSGGYRIATQTFELDGVQVPKGWSVMYSIRDTHDTSAVFKDVEAFDPDRFSPERSEDREGRFHYLPFGGGVRSCLGKQLATLFLKLLAVELAGGSRFELSTRTFPRMISVPVVHPTDGLRVKFFGLDSNQNQIMAKSDEMLDATV.

Residue Cys440 coordinates heme.

The protein belongs to the cytochrome P450 family. Heme is required as a cofactor.

Its subcellular location is the endoplasmic reticulum membrane. The protein resides in the microsome membrane. It catalyses the reaction all-trans-retinoate + reduced [NADPH--hemoprotein reductase] + O2 = all-trans-4-hydroxyretinoate + oxidized [NADPH--hemoprotein reductase] + H2O + H(+). The catalysed reaction is all-trans-retinoate + reduced [NADPH--hemoprotein reductase] + O2 = all-trans-18-hydroxyretinoate + oxidized [NADPH--hemoprotein reductase] + H2O + H(+). In terms of biological role, a cytochrome P450 monooxygenase involved in the metabolism of retinoates (RAs), the active metabolites of vitamin A, and critical signaling molecules in animals. RAs exist as at least four different isomers: all-trans-RA (atRA), 9-cis-RA, 13-cis-RA, and 9,13-dicis-RA, where atRA is considered to be the biologically active isomer, although 9-cis-RA and 13-cis-RA also have activity. Catalyzes the hydroxylation of atRA primarily at C-4 and C-18, thereby contributing to the regulation of atRA homeostasis and signaling. Hydroxylation of atRA limits its biological activity and initiates a degradative process leading to its eventual elimination. Involved in the convertion of atRA to all-trans-4-oxo-RA. Can oxidize all-trans-13,14-dihydroretinoate (DRA) to metabolites which could include all-trans-4-oxo-DRA, all-trans-4-hydroxy-DRA, all-trans-5,8-epoxy-DRA, and all-trans-18-hydroxy-DRA. Plays a role in skeletal development, both at the level of patterning and in the ossification of bone and the establishment of some synovial joints. The sequence is that of Cytochrome P450 26B1 from Danio rerio (Zebrafish).